Here is a 204-residue protein sequence, read N- to C-terminus: Large ribosomal subunit protein uL4 (204 aa).

A disordered region spans residues 49–72 (QKNRAAVSGGGKKPWRQKGTGRAR).

This sequence belongs to the universal ribosomal protein uL4 family. In terms of assembly, part of the 50S ribosomal subunit.

Its function is as follows. One of the primary rRNA binding proteins, this protein initially binds near the 5'-end of the 23S rRNA. It is important during the early stages of 50S assembly. It makes multiple contacts with different domains of the 23S rRNA in the assembled 50S subunit and ribosome. In terms of biological role, forms part of the polypeptide exit tunnel. The polypeptide is Large ribosomal subunit protein uL4 (Saccharophagus degradans (strain 2-40 / ATCC 43961 / DSM 17024)).